Here is a 1235-residue protein sequence, read N- to C-terminus: DNA polymerase catalytic subunit (1235 aa).

Disordered stretches follow at residues 640–691 (QGRF…ETAG) and 1098–1134 (AAAP…ASKP). A compositionally biased stretch (basic and acidic residues) spans 650–661 (APKRPAAAREDE). Positions 662–675 (ERPEEEGEDEDERE) are enriched in acidic residues. Basic and acidic residues predominate over residues 676–691 (EGGGEREPDGARETAG).

Belongs to the DNA polymerase type-B family. In terms of assembly, forms a complex with the ssDNA-binding protein UL29, the DNA polymerase processivity factor, and the alkaline exonuclease. Interacts with the putative helicase-primase complex subunit UL8; this interaction may coordinate leading and lagging strand DNA synthesis at the replication fork.

Its subcellular location is the host nucleus. The catalysed reaction is DNA(n) + a 2'-deoxyribonucleoside 5'-triphosphate = DNA(n+1) + diphosphate. It catalyses the reaction Endonucleolytic cleavage to 5'-phosphomonoester.. In terms of biological role, replicates viral genomic DNA. The replication complex is composed of six viral proteins: the DNA polymerase, processivity factor, primase, primase-associated factor, helicase, and ssDNA-binding protein. Additionally, the polymerase contains an intrinsic ribonuclease H (RNase H) activity that specifically degrades RNA/DNA heteroduplexes or duplex DNA substrates in the 5' to 3' direction. Therefore, it can catalyze the excision of the RNA primers that initiate the synthesis of Okazaki fragments at a replication fork during viral DNA replication. The protein is DNA polymerase catalytic subunit of Homo sapiens (Human).